Consider the following 623-residue polypeptide: F-box protein FBX14 (623 aa).

Residues 18-48 (LNLNPPCSSSSSSSSAATFTNKSRNFKSSPP) form a disordered region. Polar residues predominate over residues 33-45 (AATFTNKSRNFKS). An F-box domain is found at 54–97 (VLENVLENVLQFLTSRCDRNAVSLVCRSWYRVEAQTRLEVFIGN). Position 119 (Lys-119) interacts with 1D-myo-inositol hexakisphosphate. The segment at 126-127 (DF) is interaction with auxin-responsive proteins. 1D-myo-inositol hexakisphosphate-binding positions include 158 to 159 (KR) and Arg-391. The tract at residues 394-399 (PFDPRE) is interaction with auxin-responsive proteins. 447 to 449 (VFR) is a 1D-myo-inositol hexakisphosphate binding site. Residues 451 to 455 (CIMGR) are interaction with auxin-responsive proteins. Arg-482 contacts 1D-myo-inositol hexakisphosphate. Positions 510–511 (AF) are interaction with auxin-responsive proteins. 1D-myo-inositol hexakisphosphate contacts are provided by residues 530-531 (QK) and Arg-555.

Part of a SCF (SKP1-cullin-F-box) protein ligase complex. May interact with auxin and auxin-responsive proteins.

It localises to the nucleus. It participates in protein modification; protein ubiquitination. This chain is F-box protein FBX14 (FBX14), found in Arabidopsis thaliana (Mouse-ear cress).